The chain runs to 323 residues: uncharacterized protein (323 aa).

Disordered stretches follow at residues 185-214 (AELM…GSSW) and 271-294 (GNII…YEKL).

This sequence belongs to the IGBP1/TAP42 family.

This is an uncharacterized protein from Schizosaccharomyces pombe (strain 972 / ATCC 24843) (Fission yeast).